A 279-amino-acid polypeptide reads, in one-letter code: Digeranylgeranylglyceryl phosphate synthase (279 aa).

Transmembrane regions (helical) follow at residues 5-25, 27-47, 90-110, 127-147, 148-168, 198-218, 219-239, and 259-279; these read GFFA…AIVA, LIAT…VLLV, FLLG…IALV, FFGN…GGAY, AGWH…LAML, KTAL…AVPY, LWWG…ILFA, and TLLK…AVFL.

It belongs to the UbiA prenyltransferase family. DGGGP synthase subfamily. The cofactor is Mg(2+).

The protein resides in the cell membrane. The enzyme catalyses sn-3-O-(geranylgeranyl)glycerol 1-phosphate + (2E,6E,10E)-geranylgeranyl diphosphate = 2,3-bis-O-(geranylgeranyl)-sn-glycerol 1-phosphate + diphosphate. Its pathway is membrane lipid metabolism; glycerophospholipid metabolism. In terms of biological role, prenyltransferase that catalyzes the transfer of the geranylgeranyl moiety of geranylgeranyl diphosphate (GGPP) to the C2 hydroxyl of (S)-3-O-geranylgeranylglyceryl phosphate (GGGP). This reaction is the second ether-bond-formation step in the biosynthesis of archaeal membrane lipids. The protein is Digeranylgeranylglyceryl phosphate synthase of Methanoregula boonei (strain DSM 21154 / JCM 14090 / 6A8).